We begin with the raw amino-acid sequence, 209 residues long: Uracil phosphoribosyltransferase (209 aa).

5-phospho-alpha-D-ribose 1-diphosphate is bound by residues arginine 79, arginine 104, and 131–139; that span reads DPMLATGGS. Uracil-binding positions include isoleucine 194 and 199–201; that span reads GDA. Aspartate 200 provides a ligand contact to 5-phospho-alpha-D-ribose 1-diphosphate.

This sequence belongs to the UPRTase family. In terms of assembly, homodimer. Mg(2+) serves as cofactor.

The enzyme catalyses UMP + diphosphate = 5-phospho-alpha-D-ribose 1-diphosphate + uracil. Its pathway is pyrimidine metabolism; UMP biosynthesis via salvage pathway; UMP from uracil: step 1/1. Allosterically activated by GTP. Catalyzes the conversion of uracil and 5-phospho-alpha-D-ribose 1-diphosphate (PRPP) to UMP and diphosphate. This is Uracil phosphoribosyltransferase from Bacillus caldolyticus.